Reading from the N-terminus, the 360-residue chain is MKNNHQKIIMHLDIDAFYATVSELLHPEYKNFPIAVGSLNSRTGIISSPNYLARSYGVKAAMPIFLAKELCPNLIILPSEHNIYQSYSKHFFQIINKYTNKIEITSIDECFIDATDLVKKYHNNIRLLATKIQKEIKNKLNLSISIGISYNKTIAKMATELNKPSGISIIDENKIINLIYELNINKIPYIGEIKSQELYAINIFKIKELIATENKQKISLVLGSIYQNLVNDLKGLSKIKIIDEDIYKTISHSKTFNEDLNDFYEISNEMNDLILTVTNRLKKCNLMTNNISIYIKYPSFKTKIKQKQLTYYTDDYQTIFLAIKNLFKIMYKDETIRLIGISLNKLVKKENVKKQLFLFD.

A UmuC domain is found at Ile-9–Gly-191. Mg(2+) contacts are provided by Asp-13 and Asp-108. Glu-109 is an active-site residue.

It belongs to the DNA polymerase type-Y family. In terms of assembly, monomer. The cofactor is Mg(2+).

It localises to the cytoplasm. It carries out the reaction DNA(n) + a 2'-deoxyribonucleoside 5'-triphosphate = DNA(n+1) + diphosphate. Functionally, poorly processive, error-prone DNA polymerase involved in untargeted mutagenesis. Copies undamaged DNA at stalled replication forks, which arise in vivo from mismatched or misaligned primer ends. These misaligned primers can be extended by PolIV. Exhibits no 3'-5' exonuclease (proofreading) activity. May be involved in translesional synthesis, in conjunction with the beta clamp from PolIII. The chain is DNA polymerase IV from Ureaplasma parvum serovar 3 (strain ATCC 27815 / 27 / NCTC 11736).